The following is a 263-amino-acid chain: 3-methyl-2-oxobutanoate hydroxymethyltransferase (263 aa).

Aspartate 45 and aspartate 84 together coordinate Mg(2+). Residues 45–46 (DS), aspartate 84, and lysine 113 contribute to the 3-methyl-2-oxobutanoate site. Glutamate 115 lines the Mg(2+) pocket. The Proton acceptor role is filled by glutamate 182.

Belongs to the PanB family. As to quaternary structure, homodecamer; pentamer of dimers. Mg(2+) serves as cofactor.

The protein resides in the cytoplasm. The catalysed reaction is 3-methyl-2-oxobutanoate + (6R)-5,10-methylene-5,6,7,8-tetrahydrofolate + H2O = 2-dehydropantoate + (6S)-5,6,7,8-tetrahydrofolate. It functions in the pathway cofactor biosynthesis; coenzyme A biosynthesis. In terms of biological role, catalyzes the reversible reaction in which hydroxymethyl group from 5,10-methylenetetrahydrofolate is transferred onto alpha-ketoisovalerate to form ketopantoate. The polypeptide is 3-methyl-2-oxobutanoate hydroxymethyltransferase (Ignicoccus hospitalis (strain KIN4/I / DSM 18386 / JCM 14125)).